Reading from the N-terminus, the 117-residue chain is Acidic phospholipase A2 PA-1G (117 aa).

Cystine bridges form between C11-C71, C27-C117, C29-C45, C44-C98, C51-C91, C60-C84, and C78-C89. Y28, G30, and G32 together coordinate Ca(2+). H48 is an active-site residue. D49 contributes to the Ca(2+) binding site. Residue D92 is part of the active site.

Belongs to the phospholipase A2 family. Group I subfamily. D49 sub-subfamily. Requires Ca(2+) as cofactor. As to expression, expressed by the venom gland.

It is found in the secreted. The catalysed reaction is a 1,2-diacyl-sn-glycero-3-phosphocholine + H2O = a 1-acyl-sn-glycero-3-phosphocholine + a fatty acid + H(+). Functionally, PLA2 catalyzes the calcium-dependent hydrolysis of the 2-acyl groups in 3-sn-phosphoglycerides. The chain is Acidic phospholipase A2 PA-1G from Pseudechis australis (Mulga snake).